The chain runs to 186 residues: ATP synthase subunit b, chloroplastic (186 aa).

A helical transmembrane segment spans residues 27–43 (IFETNILNLAVVLGILL).

The protein belongs to the ATPase B chain family. As to quaternary structure, F-type ATPases have 2 components, F(1) - the catalytic core - and F(0) - the membrane proton channel. F(1) has five subunits: alpha(3), beta(3), gamma(1), delta(1), epsilon(1). F(0) has four main subunits: a(1), b(1), b'(1) and c(10-14). The alpha and beta chains form an alternating ring which encloses part of the gamma chain. F(1) is attached to F(0) by a central stalk formed by the gamma and epsilon chains, while a peripheral stalk is formed by the delta, b and b' chains.

It localises to the plastid. Its subcellular location is the chloroplast thylakoid membrane. F(1)F(0) ATP synthase produces ATP from ADP in the presence of a proton or sodium gradient. F-type ATPases consist of two structural domains, F(1) containing the extramembraneous catalytic core and F(0) containing the membrane proton channel, linked together by a central stalk and a peripheral stalk. During catalysis, ATP synthesis in the catalytic domain of F(1) is coupled via a rotary mechanism of the central stalk subunits to proton translocation. Functionally, component of the F(0) channel, it forms part of the peripheral stalk, linking F(1) to F(0). The polypeptide is ATP synthase subunit b, chloroplastic (Mesostigma viride (Green alga)).